A 365-amino-acid chain; its full sequence is Class I histocompatibility antigen, Gogo-A*0201 alpha chain (365 aa).

The first 24 residues, 1 to 24 (MAVMAPRTLLLLLLGALALTQTWA), serve as a signal peptide directing secretion. The alpha-1 stretch occupies residues 25 to 114 (GSHSMRYFST…LRGYYNQSEA (90 aa)). Residues 25–308 (GSHSMRYFST…EPSSQPTIPI (284 aa)) are Extracellular-facing. N-linked (GlcNAc...) asparagine glycosylation is present at asparagine 110. An alpha-2 region spans residues 115-206 (GSHTIQKMYG…ENGKETLQRT (92 aa)). Intrachain disulfides connect cysteine 125-cysteine 188 and cysteine 227-cysteine 283. The alpha-3 stretch occupies residues 207-298 (DAPKTHMTHH…SLPKPLTLRW (92 aa)). An Ig-like C1-type domain is found at 209–295 (PKTHMTHHAV…QHESLPKPLT (87 aa)). Residues 299–308 (EPSSQPTIPI) form a connecting peptide region. The chain crosses the membrane as a helical span at residues 309–332 (VGIIAGLVLFGAVIAGAVIAAVRW). Residues 333-365 (RRKSSDRKGGSYSQAASSDSAQGSDVSLTACKV) lie on the Cytoplasmic side of the membrane. The tract at residues 338 to 365 (DRKGGSYSQAASSDSAQGSDVSLTACKV) is disordered. Low complexity predominate over residues 342–359 (GSYSQAASSDSAQGSDVS). Serine 343 carries the phosphoserine modification. Tyrosine 344 is modified (phosphotyrosine). Phosphoserine occurs at positions 345, 349, 350, 352, 356, and 359.

It belongs to the MHC class I family. As to quaternary structure, heterodimer of an alpha chain and a beta chain (beta-2-microglobulin).

The protein resides in the membrane. Functionally, involved in the presentation of foreign antigens to the immune system. This Gorilla gorilla gorilla (Western lowland gorilla) protein is Class I histocompatibility antigen, Gogo-A*0201 alpha chain.